Here is a 966-residue protein sequence, read N- to C-terminus: Phosphoenolpyruvate carboxylase, housekeeping isozyme (966 aa).

Position 11 is a phosphoserine (Ser11). Catalysis depends on residues His172 and Lys601.

It belongs to the PEPCase type 1 family. As to quaternary structure, homotetramer. It depends on Mg(2+) as a cofactor.

It localises to the cytoplasm. It carries out the reaction oxaloacetate + phosphate = phosphoenolpyruvate + hydrogencarbonate. By light-reversible phosphorylation. Functionally, through the carboxylation of phosphoenolpyruvate (PEP) it forms oxaloacetate, a four-carbon dicarboxylic acid source for the tricarboxylic acid cycle. This chain is Phosphoenolpyruvate carboxylase, housekeeping isozyme, found in Saccharum hybrid (Sugarcane).